The following is a 363-amino-acid chain: Dual-specificity RNA methyltransferase RlmN (363 aa).

The Proton acceptor role is filled by Glu102. A Radical SAM core domain is found at 108–344; the sequence is EKKRSTLCVS…TTTIRKNRGE (237 aa). Cys115 and Cys350 are joined by a disulfide. Residues Cys122, Cys126, and Cys129 each contribute to the [4Fe-4S] cluster site. S-adenosyl-L-methionine-binding positions include 174–175, Ser206, 228–230, and Asn307; these read GE and SLH. Cys350 serves as the catalytic S-methylcysteine intermediate.

The protein belongs to the radical SAM superfamily. RlmN family. The cofactor is [4Fe-4S] cluster.

Its subcellular location is the cytoplasm. It carries out the reaction adenosine(2503) in 23S rRNA + 2 reduced [2Fe-2S]-[ferredoxin] + 2 S-adenosyl-L-methionine = 2-methyladenosine(2503) in 23S rRNA + 5'-deoxyadenosine + L-methionine + 2 oxidized [2Fe-2S]-[ferredoxin] + S-adenosyl-L-homocysteine. The enzyme catalyses adenosine(37) in tRNA + 2 reduced [2Fe-2S]-[ferredoxin] + 2 S-adenosyl-L-methionine = 2-methyladenosine(37) in tRNA + 5'-deoxyadenosine + L-methionine + 2 oxidized [2Fe-2S]-[ferredoxin] + S-adenosyl-L-homocysteine. Its function is as follows. Specifically methylates position 2 of adenine 2503 in 23S rRNA and position 2 of adenine 37 in tRNAs. m2A2503 modification seems to play a crucial role in the proofreading step occurring at the peptidyl transferase center and thus would serve to optimize ribosomal fidelity. The protein is Dual-specificity RNA methyltransferase RlmN of Buchnera aphidicola subsp. Acyrthosiphon pisum (strain APS) (Acyrthosiphon pisum symbiotic bacterium).